The primary structure comprises 549 residues: Cation/acetate symporter ActP (549 aa).

13 consecutive transmembrane segments (helical) span residues 33-53 (WQAIIMFLIFVVFTLGITYWA), 77-97 (LAIAGDYMSAASFLGISALVF), 103-123 (GLIYSLGFLVGWPIILFLIAE), 148-168 (ILSACGSLVVVALYLIAQMVG), 183-203 (IAVVLVGVLMMMYVLFGGMLA), 206-226 (WVQIIKAVLLLFGASFMAFMV), 262-282 (ISALSLGLGLMFGTAGLPHIL), 303-323 (GFMGYFYILTFIIGFGAIMLV), 355-375 (LFLGFISAVAFATILAVVAGL), 404-424 (VSKITVLILGVIAIILGVLFE), 428-448 (IAFMVGLAFAIAASCNFPIIL), 464-484 (GGWLGLITAVVLMILGPTIWV), and 493-513 (IFPYEYPALFSITVAFLGIWF).

This sequence belongs to the sodium:solute symporter (SSF) (TC 2.A.21) family.

It localises to the cell inner membrane. Transports acetate. The polypeptide is Cation/acetate symporter ActP (Escherichia coli (strain ATCC 8739 / DSM 1576 / NBRC 3972 / NCIMB 8545 / WDCM 00012 / Crooks)).